Consider the following 419-residue polypeptide: UDP-N-acetylglucosamine 1-carboxyvinyltransferase (419 aa).

Residue 22 to 23 (KN) participates in phosphoenolpyruvate binding. Residue arginine 95 participates in UDP-N-acetyl-alpha-D-glucosamine binding. Residue cysteine 119 is the Proton donor of the active site. Cysteine 119 is subject to 2-(S-cysteinyl)pyruvic acid O-phosphothioketal. Residues 164–167 (KVSV), aspartate 308, and isoleucine 330 contribute to the UDP-N-acetyl-alpha-D-glucosamine site.

This sequence belongs to the EPSP synthase family. MurA subfamily.

It localises to the cytoplasm. The catalysed reaction is phosphoenolpyruvate + UDP-N-acetyl-alpha-D-glucosamine = UDP-N-acetyl-3-O-(1-carboxyvinyl)-alpha-D-glucosamine + phosphate. The protein operates within cell wall biogenesis; peptidoglycan biosynthesis. In terms of biological role, cell wall formation. Adds enolpyruvyl to UDP-N-acetylglucosamine. This is UDP-N-acetylglucosamine 1-carboxyvinyltransferase from Rickettsia prowazekii (strain Madrid E).